Consider the following 91-residue polypeptide: Large ribosomal subunit protein uL23c (91 aa).

Belongs to the universal ribosomal protein uL23 family. Part of the 50S ribosomal subunit.

It localises to the plastid. Its subcellular location is the chloroplast. Its function is as follows. Binds to 23S rRNA. In Anthoceros angustus (Hornwort), this protein is Large ribosomal subunit protein uL23c (rpl23).